We begin with the raw amino-acid sequence, 443 residues long: tRNA modification GTPase MnmE (443 aa).

Residues R19, E78, and K118 each coordinate (6S)-5-formyl-5,6,7,8-tetrahydrofolate. The 153-residue stretch at 214 to 366 (GFKIAIIGPT…LISKIKNKLK (153 aa)) folds into the TrmE-type G domain. Residue N224 participates in K(+) binding. Residues 224–229 (NAGKSS), 243–249 (SEIAGTT), and 268–271 (DTAG) contribute to the GTP site. S228 lines the Mg(2+) pocket. 3 residues coordinate K(+): S243, I245, and T248. A Mg(2+)-binding site is contributed by T249. K443 lines the (6S)-5-formyl-5,6,7,8-tetrahydrofolate pocket.

It belongs to the TRAFAC class TrmE-Era-EngA-EngB-Septin-like GTPase superfamily. TrmE GTPase family. In terms of assembly, homodimer. Heterotetramer of two MnmE and two MnmG subunits. The cofactor is K(+).

It localises to the cytoplasm. Functionally, exhibits a very high intrinsic GTPase hydrolysis rate. Involved in the addition of a carboxymethylaminomethyl (cmnm) group at the wobble position (U34) of certain tRNAs, forming tRNA-cmnm(5)s(2)U34. This chain is tRNA modification GTPase MnmE, found in Pelagibacter ubique (strain HTCC1062).